The sequence spans 482 residues: Protein DETOXIFICATION 9 (482 aa).

The next 12 helical transmembrane spans lie at 32–49 (VASM…QYLL), 64–84 (ALAG…GVLF), 111–131 (FTSI…WMFM), 144–164 (IAEL…GYSV), 180–200 (PMVL…WLMV), 209–229 (GAAA…WVYM), 261–281 (AMMC…SGLL), 289–309 (SVIS…NGIG), 332–352 (AAAA…SLFL), 374–394 (ITPI…LSGI), 403–423 (IGAY…GLLL), and 435–455 (WAGL…VIGF).

It belongs to the multi antimicrobial extrusion (MATE) (TC 2.A.66.1) family.

The protein resides in the membrane. The protein is Protein DETOXIFICATION 9 of Arabidopsis thaliana (Mouse-ear cress).